The sequence spans 407 residues: Tyrosine--tRNA ligase (407 aa).

Y35 contributes to the L-tyrosine binding site. A 'HIGH' region motif is present at residues 40–49 (PTADSLHVGH). The L-tyrosine site is built by Y168 and Q172. The 'KMSKS' region signature appears at 228–232 (KMGKT). ATP is bound at residue K231. The 65-residue stretch at 341-405 (NSLVDLLAKC…RGKKNFNRIV (65 aa)) folds into the S4 RNA-binding domain.

It belongs to the class-I aminoacyl-tRNA synthetase family. TyrS type 1 subfamily. In terms of assembly, homodimer.

It is found in the cytoplasm. It carries out the reaction tRNA(Tyr) + L-tyrosine + ATP = L-tyrosyl-tRNA(Tyr) + AMP + diphosphate + H(+). In terms of biological role, catalyzes the attachment of tyrosine to tRNA(Tyr) in a two-step reaction: tyrosine is first activated by ATP to form Tyr-AMP and then transferred to the acceptor end of tRNA(Tyr). This is Tyrosine--tRNA ligase from Clostridium botulinum (strain Loch Maree / Type A3).